The chain runs to 237 residues: Carboxy-S-adenosyl-L-methionine synthase (237 aa).

Residues Tyr-36, Gly-61 to Ser-63, Asp-86 to Asn-87, Asp-112 to Ile-113, Asn-127, and Arg-194 each bind S-adenosyl-L-methionine.

Belongs to the class I-like SAM-binding methyltransferase superfamily. Cx-SAM synthase family. In terms of assembly, homodimer.

The catalysed reaction is prephenate + S-adenosyl-L-methionine = carboxy-S-adenosyl-L-methionine + 3-phenylpyruvate + H2O. Functionally, catalyzes the conversion of S-adenosyl-L-methionine (SAM) to carboxy-S-adenosyl-L-methionine (Cx-SAM). In Ruthia magnifica subsp. Calyptogena magnifica, this protein is Carboxy-S-adenosyl-L-methionine synthase.